The primary structure comprises 121 residues: uncharacterized protein (121 aa).

To M.jannaschii MJ0989.

This is an uncharacterized protein from Methanopyrus kandleri (strain AV19 / DSM 6324 / JCM 9639 / NBRC 100938).